The primary structure comprises 285 residues: Pantothenate synthetase (285 aa).

ATP is bound at residue 32 to 39; sequence MGALHDGH. His39 acts as the Proton donor in catalysis. Gln63 provides a ligand contact to (R)-pantoate. Gln63 lines the beta-alanine pocket. 149-152 provides a ligand contact to ATP; it reads GEKD. Residue Gln155 coordinates (R)-pantoate. ATP is bound by residues Val178 and 186 to 189; that span reads MSSR.

The protein belongs to the pantothenate synthetase family. As to quaternary structure, homodimer.

The protein localises to the cytoplasm. The catalysed reaction is (R)-pantoate + beta-alanine + ATP = (R)-pantothenate + AMP + diphosphate + H(+). Its pathway is cofactor biosynthesis; (R)-pantothenate biosynthesis; (R)-pantothenate from (R)-pantoate and beta-alanine: step 1/1. In terms of biological role, catalyzes the condensation of pantoate with beta-alanine in an ATP-dependent reaction via a pantoyl-adenylate intermediate. The chain is Pantothenate synthetase from Ruegeria pomeroyi (strain ATCC 700808 / DSM 15171 / DSS-3) (Silicibacter pomeroyi).